The following is a 996-amino-acid chain: Low-density lipoprotein receptor-related protein 8 (996 aa).

The signal sequence occupies residues 1-28; the sequence is MGRPELGALRPLALLLLLLLQLQHLSAA. Residues 29 to 858 lie on the Extracellular side of the membrane; that stretch reads DPLPGGQGPV…GSQMGSTVTA (830 aa). 8 LDL-receptor class A domains span residues 40 to 76, 79 to 117, 120 to 158, 160 to 196, 199 to 238, 250 to 287, 290 to 326, and 330 to 369; these read ECEE…DDCP, TCAD…ATCS, ECPA…AGCP, LCAP…RGCS, ACPP…ELCG, ACAP…ADCS, PCRE…AGCL, and TCEG…KVCG. Disulfide bonds link Cys41/Cys53, Cys48/Cys66, Cys60/Cys75, Cys80/Cys92, Cys87/Cys105, Cys99/Cys116, Cys121/Cys135, Cys128/Cys148, Cys142/Cys157, Cys161/Cys173, Cys168/Cys186, Cys180/Cys195, Cys200/Cys213, Cys207/Cys226, Cys220/Cys237, Cys251/Cys264, Cys259/Cys277, Cys271/Cys286, Cys291/Cys303, Cys298/Cys316, Cys310/Cys325, Cys331/Cys344, Cys339/Cys357, Cys351/Cys368, Cys373/Cys384, Cys380/Cys393, Cys395/Cys407, Cys413/Cys423, Cys419/Cys432, and Cys434/Cys447. Ca(2+)-binding residues include Trp58, Asp61, Asp63, Asp65, Asp71, and Glu72. An N-linked (GlcNAc...) asparagine glycan is attached at Asn170. Residues 364-408 form the EGF-like 1 domain; sequence PQKVCGLNECLHNNGGCSHICTDLKIGFECTCPAGFQLLDQKTCG. The EGF-like 2; calcium-binding domain occupies 409-448; that stretch reads DIDECQDPDACSQICVNYKGYFKCECHPGYEMDTLTKNCK. 5 LDL-receptor class B repeats span residues 495–541, 542–584, 585–628, 629–671, and 672–714; these read NRIY…DWVH, KHIY…DPLR, GFMY…DLLS, QRLY…AVFE, and DKVF…FHEL. Asn551 carries N-linked (GlcNAc...) asparagine glycosylation. The clustered O-linked oligosaccharides stretch occupies residues 773 to 831; that stretch reads STSTTTLASAMTRTVPATTRAPGTTIHDPTYQNHSTETPSQTAAAPHSVNVPRAPSTSP. A disordered region spans residues 778 to 851; it reads TLASAMTRTV…SQHYGNEGSQ (74 aa). Positions 802 to 815 are enriched in polar residues; the sequence is TYQNHSTETPSQTA. A glycan (N-linked (GlcNAc...) asparagine) is linked at Asn805. The segment covering 824–839 has biased composition (low complexity); it reads PRAPSTSPSTPSPATS. A glycan (N-linked (GlcNAc...) asparagine) is linked at Asn840. Over residues 840–851 the composition is skewed to polar residues; sequence NHSQHYGNEGSQ. The helical transmembrane segment at 859–881 threads the bilayer; it reads AVIGVIVPIVVIALLCMSGYLIW. Residues 882–996 lie on the Cytoplasmic side of the membrane; it reads RNWKRKNTKS…ALSLEDDGLP (115 aa).

The protein belongs to the LDLR family. Homooligomer. Interacts with VLDLR. Reelin associates with two or more receptor molecules. Interacts with DAB1 and JNK-interacting proteins. Interacts with SNX17. Interacts with PCSK9. Interacts with MDK; this interaction is calcium dependent. Interacts with CLU. O-glycosylated. Some alternatively spliced isoforms lack the O-linked sugar domain. Post-translationally, undergoes sequential, furin and gamma-secretase dependent, proteolytic processing, resulting in the extracellular release of the entire ligand-binding domain as a soluble polypeptide and in the intracellular domain (ICD) release into the cytoplasm. The gamma-secretase-dependent proteolytical processing occurs after the bulk of the extracellular domain has been shed, in a furin-dependent manner, in alternatively spliced isoforms carrying the furin cleavage site. Hypoglycosylation (mainly hypo-O-glycosylation) leads to increased extracellular cleavage, which in turn results in accelerating release of the intracellular domain (ICD) by the gamma-secretase. The resulting receptor fragment is able to inhibit Reelin signaling and in particular the Reelin-induced DAB1 phosphorylation. In terms of processing, tyrosine phosphorylated upon apoE binding. Ubiquitinated by MYLIP leading to degradation. As to expression, expressed in neurons throughout the brain, with strong expression in pyramidal neurons of the hippocampus, granule cells of the dentate gyrus, cortical neurons and Purkinje cells of the cerebellum. Also expressed in the epithelium of the choroid plexus and of the blood vessels (apical expression), as well as in the epididymis.

It localises to the cell membrane. The protein localises to the secreted. Its function is as follows. Cell surface receptor for Reelin (RELN) and apolipoprotein E (apoE)-containing ligands. LRP8 participates in transmitting the extracellular Reelin signal to intracellular signaling processes, by binding to DAB1 on its cytoplasmic tail. Reelin acts via both the VLDL receptor (VLDLR) and LRP8 to regulate DAB1 tyrosine phosphorylation and microtubule function in neurons. LRP8 has higher affinity for Reelin than VLDLR. LRP8 is thus a key component of the Reelin pathway which governs neuronal layering of the forebrain during embryonic brain development. Binds the endoplasmic reticulum resident receptor-associated protein (RAP). Binds dimers of beta 2-glycoprotein I and may be involved in the suppression of platelet aggregation in the vasculature. Highly expressed in the initial segment of the epididymis, where it affects the functional expression of clusterin and phospholipid hydroperoxide glutathione peroxidase (PHGPx), two proteins required for sperm maturation. May also function as an endocytic receptor. Not required for endocytic uptake of SEPP1 in the kidney which is mediated by LRP2. Together with its ligand, apolipoprotein E (apoE), may indirectly play a role in the suppression of the innate immune response by controlling the survival of myeloid-derived suppressor cells. In Mus musculus (Mouse), this protein is Low-density lipoprotein receptor-related protein 8 (Lrp8).